The chain runs to 580 residues: Arginine--tRNA ligase (580 aa).

The short motif at 137–147 (ANPTGPLHIGH) is the 'HIGH' region element.

It belongs to the class-I aminoacyl-tRNA synthetase family. Monomer.

The protein localises to the cytoplasm. It catalyses the reaction tRNA(Arg) + L-arginine + ATP = L-arginyl-tRNA(Arg) + AMP + diphosphate. The sequence is that of Arginine--tRNA ligase from Anaplasma phagocytophilum (strain HZ).